Reading from the N-terminus, the 573-residue chain is Protein DSE1 (573 aa).

4 WD repeats span residues Asp-144 to Lys-185, Arg-315 to Val-351, Ala-356 to Tyr-395, and Glu-397 to Gly-448. A compositionally biased stretch (low complexity) spans Ser-500–Asn-509. The interval Ser-500–Ser-519 is disordered. A Glycyl lysine isopeptide (Lys-Gly) (interchain with G-Cter in ubiquitin) cross-link involves residue Lys-553.

It belongs to the WD repeat DSE1 family.

The protein localises to the bud neck. Functionally, involved in cell wall metabolism and required for the separation of the mother and daughter cells. The protein is Protein DSE1 (DSE1) of Saccharomyces cerevisiae (strain ATCC 204508 / S288c) (Baker's yeast).